We begin with the raw amino-acid sequence, 632 residues long: Cytosolic Fe-S cluster assembly factor NAR1 (632 aa).

A [4Fe-4S] cluster-binding site is contributed by C20. Residues 27–53 (LPAKPEDSSNPYEVTTEDKAAASQPPP) form a disordered region. Residues C62, C65, and C68 each contribute to the [4Fe-4S] cluster site. Disordered stretches follow at residues 99-119 (WQTQNGTNGTNGTNGTTNGHS) and 210-231 (LSPETSNPSTKPGSEGAIDTTP). Residues 101–119 (TQNGTNGTNGTNGTTNGHS) are compositionally biased toward low complexity. A compositionally biased stretch (polar residues) spans 211–221 (SPETSNPSTKP). 4 residues coordinate [4Fe-4S] cluster: C240, C295, C486, and C490. Residues 542–573 (GSDSEEEKVDQDGDQNMQDATTNGHTSEPDIV) form a disordered region. The segment covering 544–554 (DSEEEKVDQDG) has biased composition (acidic residues). Over residues 555–567 (DQNMQDATTNGHT) the composition is skewed to polar residues.

This sequence belongs to the NARF family.

In terms of biological role, component of the cytosolic Fe/S protein assembly machinery. Required for maturation of extramitochondrial Fe/S proteins. May play a role in the transfer of pre-assembled Fe/S clusters to target apoproteins. In Phaeosphaeria nodorum (strain SN15 / ATCC MYA-4574 / FGSC 10173) (Glume blotch fungus), this protein is Cytosolic Fe-S cluster assembly factor NAR1 (NAR1).